A 107-amino-acid polypeptide reads, in one-letter code: Large ribosomal subunit protein uL24 (107 aa).

Belongs to the universal ribosomal protein uL24 family. Part of the 50S ribosomal subunit.

One of two assembly initiator proteins, it binds directly to the 5'-end of the 23S rRNA, where it nucleates assembly of the 50S subunit. In terms of biological role, one of the proteins that surrounds the polypeptide exit tunnel on the outside of the subunit. The chain is Large ribosomal subunit protein uL24 from Fervidobacterium nodosum (strain ATCC 35602 / DSM 5306 / Rt17-B1).